A 169-amino-acid polypeptide reads, in one-letter code: S-ribosylhomocysteine lyase (169 aa).

Residues His54, His58, and Cys128 each contribute to the Fe cation site.

This sequence belongs to the LuxS family. Homodimer. It depends on Fe cation as a cofactor.

It catalyses the reaction S-(5-deoxy-D-ribos-5-yl)-L-homocysteine = (S)-4,5-dihydroxypentane-2,3-dione + L-homocysteine. Functionally, involved in the synthesis of autoinducer 2 (AI-2) which is secreted by bacteria and is used to communicate both the cell density and the metabolic potential of the environment. The regulation of gene expression in response to changes in cell density is called quorum sensing. Catalyzes the transformation of S-ribosylhomocysteine (RHC) to homocysteine (HC) and 4,5-dihydroxy-2,3-pentadione (DPD). In Shewanella sediminis (strain HAW-EB3), this protein is S-ribosylhomocysteine lyase.